We begin with the raw amino-acid sequence, 248 residues long: Triosephosphate isomerase (248 aa).

D-glyceraldehyde 3-phosphate is bound by residues Asn-10 and Lys-12. His-95 acts as the Electrophile in catalysis. Residue Glu-165 is the Proton acceptor of the active site. Residues Gly-171, Leu-230, and 232 to 233 each bind D-glyceraldehyde 3-phosphate; that span reads GN.

Belongs to the triosephosphate isomerase family. As to quaternary structure, homodimer.

It catalyses the reaction D-glyceraldehyde 3-phosphate = dihydroxyacetone phosphate. It participates in carbohydrate biosynthesis; gluconeogenesis. It functions in the pathway carbohydrate degradation; glycolysis; D-glyceraldehyde 3-phosphate from glycerone phosphate: step 1/1. Functionally, catalyzes the interconversion of glyceraldehyde 3-phosphate and dihydroxyacetone phosphate in the glycolytic and gluconeogenic pathways. The protein is Triosephosphate isomerase of Plasmodium falciparum (isolate 3D7).